A 351-amino-acid chain; its full sequence is MSMCTIVSISQSALKHNLLVVKENSPNSKIVSMVKANAYGHKINLINPIINHSDLLAVSEISEAKKLRKITKKPILLLSGVIEDQELQQAIKLNCQIVVHDKTQITTINNTKQPINIWIKINTGMHRLGLSTHEYFDCIKLLANNPLINTQCVMSHFACADEINHPMNQSQLFEFKKSTYHTTKRSMANSAAILSNPASHFDYVRPGIMLYGVSPFEIINNHLKPVMQISAPIMSIKTIQTGDSVGYGATWIAKKSTTIATIGIGYGDGYPRHAKNGTPVLINNNLCPLIGRVSMDLICVDISNVKASVGDNVILWGAQKLRIETIAKYSDTIAYELLTGISSRVAFVSTI.

Catalysis depends on Lys35, which acts as the Proton acceptor; specific for D-alanine. An N6-(pyridoxal phosphate)lysine modification is found at Lys35. Arg127 lines the substrate pocket. Residue Tyr247 is the Proton acceptor; specific for L-alanine of the active site. Met295 lines the substrate pocket.

The protein belongs to the alanine racemase family. Requires pyridoxal 5'-phosphate as cofactor.

It carries out the reaction L-alanine = D-alanine. The protein operates within amino-acid biosynthesis; D-alanine biosynthesis; D-alanine from L-alanine: step 1/1. In terms of biological role, catalyzes the interconversion of L-alanine and D-alanine. May also act on other amino acids. The protein is Alanine racemase (alr) of Vesicomyosocius okutanii subsp. Calyptogena okutanii (strain HA).